A 2414-amino-acid polypeptide reads, in one-letter code: Centrosome-associated protein CEP250 (2414 aa).

Coiled-coil stretches lie at residues 91-153 (EEPN…ELVR) and 248-357 (LVAK…VEEE). Disordered stretches follow at residues 356 to 384 (EEDTVTQSSGHEDSLQSDCNGLSQFDPQD), 672 to 707 (AEEAGAELQAELRGTREEKEELKDKLSEAHHQQETA), 1191 to 1212 (SRPELRGGGDSAPTLWGPDPDQ), 1269 to 1303 (EAQKSQVHSELQDLQRQLSQSQEEKSKWEGRQNSL), 2050 to 2071 (AGARRSQENGIQEKQSLEQERQ), 2194 to 2238 (ALEE…KERL), and 2275 to 2317 (RERR…GSSD). The segment covering 371 to 381 (QSDCNGLSQFD) has biased composition (polar residues). A coiled-coil region spans residues 400 to 1165 (QQAVQDLRQQ…QLEALVAEQQ (766 aa)). The span at 684–704 (RGTREEKEELKDKLSEAHHQQ) shows a compositional bias: basic and acidic residues. 2 coiled-coil regions span residues 1237-2200 (LQKL…EQQS) and 2231-2290 (GVEE…ASRA). Residues 1280–1289 (QDLQRQLSQS) are compositionally biased toward low complexity. The segment covering 2196-2209 (EEQQSGGPHSTSRA) has biased composition (polar residues). Positions 2275–2286 (RERRKLKRDSVR) are enriched in basic and acidic residues. Phosphoserine is present on serine 2292. Low complexity predominate over residues 2305 to 2317 (QQDGRGSQRGSSD). Residues 2320-2345 (LVVELQREVALLRAQLALERKQRQDY) are a coiled coil. Phosphoserine; by NEK2 is present on residues serine 2389 and serine 2393. A disordered region spans residues 2390–2414 (LNQSLTSPGPCLLHPSLDTTQNTHR).

As to quaternary structure, monomer and homodimer. Forms a complex in vitro with both NEK2 kinase and the PPP1CC catalytic subunit of protein phosphatase 1 (PP1). Interacts with CEP135. Interacts with CROCC/rootletin. Interacts with CNTLN. Interacts with NIN (via C-terminus). In terms of processing, differentially phosphorylated during cell cycle. Phosphorylation may regulate association/dissociation from centrosome. During M phase of mitosis, C-terminal part is phosphorylated by NEK2, suggesting that it may trigger the dissociation from the mitotic centrosome. Dephosphorylated in vitro by the PP1 phosphatase. In terms of tissue distribution, expressed in the retina.

The protein resides in the cytoplasm. It is found in the perinuclear region. Its subcellular location is the cytoskeleton. The protein localises to the microtubule organizing center. It localises to the centrosome. The protein resides in the centriole. It is found in the cilium basal body. Its subcellular location is the cell projection. The protein localises to the cilium. It localises to the photoreceptor outer segment. The protein resides in the photoreceptor inner segment. Its function is as follows. Plays an important role in centrosome cohesion during interphase. Recruits CCDC102B to the proximal ends of centrioles. Maintains centrosome cohesion by forming intercentriolar linkages. Accumulates at the proximal end of each centriole, forming supramolecular assemblies with viscous material properties that promote organelle cohesion. May be involved in ciliogenesis. The sequence is that of Centrosome-associated protein CEP250 (Cep250) from Mus musculus (Mouse).